A 232-amino-acid chain; its full sequence is Phosphatidylserine decarboxylase proenzyme (232 aa).

Residue serine 190 is the Schiff-base intermediate with substrate; via pyruvic acid of the active site. Serine 190 carries the pyruvic acid (Ser); by autocatalysis modification.

It belongs to the phosphatidylserine decarboxylase family. PSD-A subfamily. As to quaternary structure, heterodimer of a large membrane-associated beta subunit and a small pyruvoyl-containing alpha subunit. Pyruvate serves as cofactor. Is synthesized initially as an inactive proenzyme. Formation of the active enzyme involves a self-maturation process in which the active site pyruvoyl group is generated from an internal serine residue via an autocatalytic post-translational modification. Two non-identical subunits are generated from the proenzyme in this reaction, and the pyruvate is formed at the N-terminus of the alpha chain, which is derived from the carboxyl end of the proenzyme. The post-translation cleavage follows an unusual pathway, termed non-hydrolytic serinolysis, in which the side chain hydroxyl group of the serine supplies its oxygen atom to form the C-terminus of the beta chain, while the remainder of the serine residue undergoes an oxidative deamination to produce ammonia and the pyruvoyl prosthetic group on the alpha chain.

The protein resides in the cell membrane. The catalysed reaction is a 1,2-diacyl-sn-glycero-3-phospho-L-serine + H(+) = a 1,2-diacyl-sn-glycero-3-phosphoethanolamine + CO2. The protein operates within phospholipid metabolism; phosphatidylethanolamine biosynthesis; phosphatidylethanolamine from CDP-diacylglycerol: step 2/2. Its function is as follows. Catalyzes the formation of phosphatidylethanolamine (PtdEtn) from phosphatidylserine (PtdSer). The chain is Phosphatidylserine decarboxylase proenzyme from Bartonella bacilliformis (strain ATCC 35685 / KC583 / Herrer 020/F12,63).